A 234-amino-acid chain; its full sequence is Sugar fermentation stimulation protein A (234 aa).

Positions 201 to 220 (LLSEAQQRGVEILAYKAEIS) form a DNA-binding region, H-T-H motif.

The protein belongs to the SfsA family.

Functionally, binds to DNA non-specifically. Could be a regulatory factor involved in maltose metabolism. The sequence is that of Sugar fermentation stimulation protein A from Shigella dysenteriae serotype 1 (strain Sd197).